The following is a 341-amino-acid chain: Biotin synthase (341 aa).

The Radical SAM core domain occupies 56–285; the sequence is ADIQRAALLS…KARVRLSAGR (230 aa). The [4Fe-4S] cluster site is built by cysteine 71, cysteine 75, and cysteine 78. Residues cysteine 116, cysteine 148, cysteine 208, and arginine 280 each contribute to the [2Fe-2S] cluster site.

Belongs to the radical SAM superfamily. Biotin synthase family. Homodimer. [4Fe-4S] cluster is required as a cofactor. Requires [2Fe-2S] cluster as cofactor.

The catalysed reaction is (4R,5S)-dethiobiotin + (sulfur carrier)-SH + 2 reduced [2Fe-2S]-[ferredoxin] + 2 S-adenosyl-L-methionine = (sulfur carrier)-H + biotin + 2 5'-deoxyadenosine + 2 L-methionine + 2 oxidized [2Fe-2S]-[ferredoxin]. The protein operates within cofactor biosynthesis; biotin biosynthesis; biotin from 7,8-diaminononanoate: step 2/2. Functionally, catalyzes the conversion of dethiobiotin (DTB) to biotin by the insertion of a sulfur atom into dethiobiotin via a radical-based mechanism. The polypeptide is Biotin synthase (Methylorubrum populi (strain ATCC BAA-705 / NCIMB 13946 / BJ001) (Methylobacterium populi)).